The following is a 2178-amino-acid chain: Streptococcal hemagglutinin (2178 aa).

Positions 1–90 are cleaved as a signal peptide; that stretch reads MFFKRQKGQY…AVVTSSSVYA (90 aa). A non-repeat region 1 (NR1) region spans residues 91-137; it reads EEEQALEKVIDTRDVLATRGEAVLSEEAATTLSSEGANPVESLSDTL. The tract at residues 138 to 219 is ser-rich region 1 (SR1); the sequence is SASESASANS…SLISSDSSNS (82 aa). Residues 192–244 are compositionally biased toward low complexity; it reads TSQSFSSTTSSTQSSNNESLISSDSSNSLNTNQSVSARNQNARVRTRRAVAAN. Disordered stretches follow at residues 192–246, 495–557, 584–653, 836–857, 884–917, 944–993, 1020–1289, 1341–1390, 1488–1685, 1725–1901, and 2119–2151; these read TSQS…ANDT, VSAS…SVSA, SAST…SVSA, SASTSASVSASESASTSASVSA, SASTSASVSASESASTSASVSASESASTSASVSA, SAST…SESA, SASV…SVSA, ASTS…ESAS, ASTS…SAST, and LSQSLSDSQSTSATQSMHDRISKGQLPRTGESE. The interval 220–449 is non-repeat region 2 (NR2); it reads LNTNQSVSAR…ANRVVKDLQI (230 aa). The tract at residues 450–2143 is ser-rich region 2 (SR2); the sequence is SKSNSASQSS…SMHDRISKGQ (1694 aa). Low complexity predominate over residues 2119–2130; the sequence is LSQSLSDSQSTS. The LPXTG sorting signal motif lies at 2144–2148; it reads LPRTG. Threonine 2147 carries the post-translational modification Pentaglycyl murein peptidoglycan amidated threonine. Positions 2148-2178 are cleaved as a propeptide — removed by sortase; the sequence is GESESKASILALGIGALGLAFKKRKKNESED.

It belongs to the serine-rich repeat protein (SRRP) family. Post-translationally, the protein is glycosylated in vivo; constructs without SR1 and SR2 are not glycosylated.

The protein resides in the secreted. The protein localises to the cell wall. Its function is as follows. A cell wall protein involved with PadA in host cell interactions required for colonization and pathogensis. Mediates hemagglutination and adherence to ghst glycoproteins. Recognizes fetuin-A (AHSG), a highly glycosylated human plasma protein, also involved in recognition of human platelets, probably via platelet glycoprotein Ib alpha (GP1BA). Acts in concert with PadA to promote binding to glycosylated human fibronectin (FN1) and vitronectin (VTN), and biofilm formation. Plays a major role in fibronectin and vitronectin binding; binding is mediated by glycosylated regions. Probably mediates interaction of PadA with resting platelets. This chain is Streptococcal hemagglutinin, found in Streptococcus gordonii (strain Challis / ATCC 35105 / BCRC 15272 / CH1 / DL1 / V288).